The chain runs to 856 residues: Translation initiation factor IF-2 (856 aa).

2 disordered regions span residues 1 to 248 (MSDN…ARAR) and 254 to 273 (KRAR…QQKQ). Positions 22–38 (ETGQVKQSFSHGRSNTV) are enriched in polar residues. Positions 83-93 (APRPAPAPIPT) are enriched in pro residues. Residues 100–150 (LERREQQERLLREAEEARMAALEETRRREERAKAEATEEERRRAEENRRAE) show a composition bias toward basic and acidic residues. Residues 156-196 (AAAAAAAAATAEAETAAAAPREEAPAAAGTAEEAPRTSSST) are compositionally biased toward low complexity. Positions 197–209 (MPPPRRFTPVPSP) are enriched in pro residues. Positions 210–229 (KRPEPPRPQQRDRKGDDRRQ) are enriched in basic and acidic residues. One can recognise a tr-type G domain in the interval 356–526 (PRPPVVTIMG…ELQAELLELK (171 aa)). A G1 region spans residues 365–372 (GHVDHGKT). 365 to 372 (GHVDHGKT) lines the GTP pocket. Positions 390–394 (GITQH) are G2. The segment at 412-415 (DTPG) is G3. Residues 412–416 (DTPGH) and 466–469 (NKMD) each bind GTP. A G4 region spans residues 466 to 469 (NKMD). The G5 stretch occupies residues 502-504 (SAL).

Belongs to the TRAFAC class translation factor GTPase superfamily. Classic translation factor GTPase family. IF-2 subfamily.

The protein resides in the cytoplasm. Its function is as follows. One of the essential components for the initiation of protein synthesis. Protects formylmethionyl-tRNA from spontaneous hydrolysis and promotes its binding to the 30S ribosomal subunits. Also involved in the hydrolysis of GTP during the formation of the 70S ribosomal complex. This chain is Translation initiation factor IF-2, found in Rhizorhabdus wittichii (strain DSM 6014 / CCUG 31198 / JCM 15750 / NBRC 105917 / EY 4224 / RW1) (Sphingomonas wittichii).